A 552-amino-acid chain; its full sequence is Lon protease 2 (552 aa).

ATP is bound at residue 97–104; that stretch reads GPPGVGKT. A Lon proteolytic domain is found at 349 to 535; that stretch reads EPQVGIVNGL…QEVLDEILVN (187 aa). Active-site residues include S445 and K488.

This sequence belongs to the peptidase S16 family. In terms of assembly, homohexamer. Organized in a ring with a central cavity.

It localises to the cytoplasm. It carries out the reaction Hydrolysis of proteins in presence of ATP.. Its function is as follows. ATP-dependent serine protease that mediates the selective degradation of mutant and abnormal proteins as well as certain short-lived regulatory proteins. Required for cellular homeostasis and for survival from DNA damage and developmental changes induced by stress. Degrades polypeptides processively to yield small peptide fragments that are 5 to 10 amino acids long. Binds to DNA in a double-stranded, site-specific manner. The protein is Lon protease 2 (lon2) of Bacillus subtilis (strain 168).